Reading from the N-terminus, the 348-residue chain is Phenylalanine--tRNA ligase alpha subunit (348 aa).

A Mg(2+)-binding site is contributed by glutamate 259.

This sequence belongs to the class-II aminoacyl-tRNA synthetase family. Phe-tRNA synthetase alpha subunit type 1 subfamily. Tetramer of two alpha and two beta subunits. Mg(2+) serves as cofactor.

It localises to the cytoplasm. It carries out the reaction tRNA(Phe) + L-phenylalanine + ATP = L-phenylalanyl-tRNA(Phe) + AMP + diphosphate + H(+). The polypeptide is Phenylalanine--tRNA ligase alpha subunit (Lactiplantibacillus plantarum (strain ATCC BAA-793 / NCIMB 8826 / WCFS1) (Lactobacillus plantarum)).